We begin with the raw amino-acid sequence, 303 residues long: Bifunctional protein FolD (303 aa).

NADP(+)-binding positions include 175–177 and I243; that span reads GVS.

It belongs to the tetrahydrofolate dehydrogenase/cyclohydrolase family. As to quaternary structure, homodimer.

It catalyses the reaction (6R)-5,10-methylene-5,6,7,8-tetrahydrofolate + NADP(+) = (6R)-5,10-methenyltetrahydrofolate + NADPH. It carries out the reaction (6R)-5,10-methenyltetrahydrofolate + H2O = (6R)-10-formyltetrahydrofolate + H(+). It functions in the pathway one-carbon metabolism; tetrahydrofolate interconversion. Functionally, catalyzes the oxidation of 5,10-methylenetetrahydrofolate to 5,10-methenyltetrahydrofolate and then the hydrolysis of 5,10-methenyltetrahydrofolate to 10-formyltetrahydrofolate. In Xanthomonas euvesicatoria pv. vesicatoria (strain 85-10) (Xanthomonas campestris pv. vesicatoria), this protein is Bifunctional protein FolD.